The chain runs to 345 residues: SLAM family member 5 (345 aa).

Residues 1-21 form the signal peptide; sequence MAQHHLWILLLCLQTWPEAAG. Residues 22–225 are Extracellular-facing; that stretch reads KDSEIFTVNG…AMGFRTHHTG (204 aa). One can recognise an Ig-like V-type domain in the interval 26-129; the sequence is IFTVNGILGE…TTKRYNLQIY (104 aa). Positions 135–207 constitute an Ig-like C2-type domain; that stretch reads PKITQSLMAS…PVSNNSDSIS (73 aa). N-linked (GlcNAc...) asparagine glycosylation occurs at Asn-150. Cysteines 155 and 193 form a disulfide. Residues 226 to 246 traverse the membrane as a helical segment; sequence LLSVLAMFFLLVLILSSVFLF. Over 247-345 the chain is Cytoplasmic; sequence RLFKRRQGRI…PGTSSYEIVI (99 aa). The short motif at 277–282 is the ITSM 1 element; the sequence is TIYTYI. Position 279 is a phosphotyrosine (Tyr-279). Tyr-296 carries the phosphotyrosine; by LYN modification. Positions 314-319 match the ITSM 2 motif; it reads TVYSEV. Phosphotyrosine is present on Tyr-316. Residues 326 to 345 are disordered; it reads GKASTQDSKPPGTSSYEIVI. The segment covering 328–345 has biased composition (polar residues); sequence ASTQDSKPPGTSSYEIVI. The residue at position 341 (Tyr-341) is a Phosphotyrosine; by FES.

Homodimer; via its extracellular domain. Forms a head to tail dimer with a CD48 molecule from another cell. Interacts with SH2 domain-containing proteins SH2D1A/SAP and SH2D1B/EAT-2. Interacts with tyrosine-protein phosphatases PTPN6/SHP-1 and PTPN11//SHP-2 via its phosphorylated cytoplasmic domain, and this interaction is blocked by SH2D1A. Interacts (via phosphorylated ITSM 1 and 2) with INPP5D/SHIP1. In terms of processing, phosphorylated by tyrosine-protein kinase LCK on tyrosine residues following ligation induced by agonist monoclonal antibody. The association with SH2D1A is dependent of tyrosine phosphorylation of its cytoplasmic domain. Phosphorylated on Tyr-296 and Tyr-316 following platelet aggregation. Phosphorylated on tyrosine residues upon high affinity immunoglobulin epsilon receptor aggregation in mast cells. N-glycosylated. As to expression, predominantly expressed in hematopoietic tissues, such as lymph node, spleen and peripheral leukocytes. Expressed in macrophages, B-cells, monocytes, platelets, thymocytes, T-cells and dendritic cells. Highly expressed in memory T-cells. Expressed in mast cells.

It is found in the cell membrane. In terms of biological role, self-ligand receptor of the signaling lymphocytic activation molecule (SLAM) family. SLAM receptors triggered by homo- or heterotypic cell-cell interactions are modulating the activation and differentiation of a wide variety of immune cells and thus are involved in the regulation and interconnection of both innate and adaptive immune response. Activities are controlled by presence or absence of small cytoplasmic adapter proteins, SH2D1A/SAP and/or SH2D1B/EAT-2. Can mediate natural killer (NK) cell cytotoxicity dependent on SH2D1A and SH2D1B. Increases proliferative responses of activated T-cells and SH2D1A/SAP does not seem be required for this process. Homophilic interactions enhance interferon gamma/IFNG secretion in lymphocytes and induce platelet stimulation via a SH2D1A-dependent pathway. May serve as a marker for hematopoietic progenitor cells Required for a prolonged T-cell:B-cell contact, optimal T follicular helper function, and germinal center formation. In germinal centers involved in maintaining B-cell tolerance and in preventing autoimmunity. In mast cells negatively regulates high affinity immunoglobulin epsilon receptor signaling; independent of SH2D1A and SH2D1B but implicating FES and PTPN6/SHP-1. In macrophages enhances LPS-induced MAPK phosphorylation and NF-kappaB activation and modulates LPS-induced cytokine secretion; involving ITSM 2. Positively regulates macroautophagy in primary dendritic cells via stabilization of IRF8; inhibits TRIM21-mediated proteasomal degradation of IRF8. The protein is SLAM family member 5 (CD84) of Homo sapiens (Human).